The following is a 162-amino-acid chain: uncharacterized protein (162 aa).

This is an uncharacterized protein from Salmonella typhi.